Here is a 90-residue protein sequence, read N- to C-terminus: Small ribosomal subunit protein bS16 (90 aa).

The protein belongs to the bacterial ribosomal protein bS16 family.

This chain is Small ribosomal subunit protein bS16, found in Lysinibacillus sphaericus (strain C3-41).